Reading from the N-terminus, the 520-residue chain is Amine oxidase [flavin-containing] B (520 aa).

Ser2 is modified (N-acetylserine). Residues 2-489 (SNKSDVIVVG…TFLERHLPSV (488 aa)) are Cytoplasmic-facing. Lys52 and Lys248 each carry N6-acetyllysine. Cys397 carries the post-translational modification S-8alpha-FAD cysteine. The chain crosses the membrane as a helical; Anchor for type IV membrane protein span at residues 490–516 (PGLLKLFGLTTILSATALGFLAHKRGL). Residues 517–520 (FVHF) lie on the Mitochondrial intermembrane side of the membrane.

Belongs to the flavin monoamine oxidase family. In terms of assembly, monomer, homo- or heterodimer (containing two subunits of similar size). Each subunit contains a covalently bound flavin. Enzymatically active as monomer. FAD serves as cofactor.

It is found in the mitochondrion outer membrane. It catalyses the reaction a secondary aliphatic amine + O2 + H2O = a primary amine + an aldehyde + H2O2. The catalysed reaction is (R)-adrenaline + O2 + H2O = (R)-3,4-dihydroxymandelaldehyde + methylamine + H2O2. It carries out the reaction a primary methyl amine + O2 + H2O = an aldehyde + H2O2 + NH4(+). The enzyme catalyses benzylamine + O2 + H2O = benzaldehyde + H2O2 + NH4(+). It catalyses the reaction dopamine + O2 + H2O = 3,4-dihydroxyphenylacetaldehyde + H2O2 + NH4(+). The catalysed reaction is tyramine + O2 + H2O = (4-hydroxyphenyl)acetaldehyde + H2O2 + NH4(+). It carries out the reaction (R)-noradrenaline + O2 + H2O = (R)-3,4-dihydroxymandelaldehyde + H2O2 + NH4(+). The enzyme catalyses 2-phenylethylamine + O2 + H2O = 2-phenylacetaldehyde + H2O2 + NH4(+). It catalyses the reaction N-acetylputrescine + O2 + H2O = 4-acetamidobutanal + H2O2 + NH4(+). Functionally, catalyzes the oxidative deamination of primary and some secondary amines such as neurotransmitters, and exogenous amines including the tertiary amine, neurotoxin 1-methyl-4-phenyl-1,2,3,6-tetrahydropyridine (MPTP), with concomitant reduction of oxygen to hydrogen peroxide and participates in the metabolism of neuroactive and vasoactive amines in the central nervous system and peripheral tissues. Preferentially degrades benzylamine and phenylethylamine. The chain is Amine oxidase [flavin-containing] B from Mus musculus (Mouse).